Reading from the N-terminus, the 142-residue chain is Type II secretion system core protein G (142 aa).

Positions 1–8 (MQRRQQSG) are cleaved as a propeptide — leader sequence. The residue at position 9 (phenylalanine 9) is an N-methylphenylalanine. The chain crosses the membrane as a helical span at residues 9-29 (FTLIEIMVVVVILGILAALVV). The interval 121-142 (SLGADGKEGGSDNDADIGNWDN) is disordered.

The protein belongs to the GSP G family. In terms of assembly, type II secretion system is composed of four main components: the outer membrane complex, the inner membrane complex, the cytoplasmic secretion ATPase and the periplasm-spanning pseudopilus. Forms homomultimers. Interacts with pseudopilin tip ternary complex made of XcpX, XcpU, XcpV and XcpW. Interacts with PilA. Post-translationally, cleaved by the prepilin peptidase. In terms of processing, methylated by prepilin peptidase at the amino group of the N-terminal phenylalanine once the leader sequence is cleaved.

It is found in the cell inner membrane. Its function is as follows. Core component of the type II secretion system required for the energy-dependent secretion of extracellular factors such as proteases and toxins from the periplasm. Pseudopilin (pilin-like) protein that polymerizes to form the pseudopilus. Further polymerization triggers pseudopilus growth. Type II pseudopilus confers increased bacterial adhesive capabilities. The polypeptide is Type II secretion system core protein G (xcpT) (Pseudomonas aeruginosa (strain ATCC 15692 / DSM 22644 / CIP 104116 / JCM 14847 / LMG 12228 / 1C / PRS 101 / PAO1)).